Here is a 289-residue protein sequence, read N- to C-terminus: Polyamine aminopropyltransferase (289 aa).

Positions 5-245 (PGPITLIEPL…YAVNFILGSL (241 aa)) constitute a PABS domain. Residue Gln-36 participates in S-methyl-5'-thioadenosine binding. 2 residues coordinate spermidine: His-67 and Glu-91. S-methyl-5'-thioadenosine is bound by residues Asp-111 and 143–144 (DG). The active-site Proton acceptor is Asp-164.

The protein belongs to the spermidine/spermine synthase family. In terms of assembly, homodimer or homotetramer.

The protein resides in the cytoplasm. The catalysed reaction is S-adenosyl 3-(methylsulfanyl)propylamine + putrescine = S-methyl-5'-thioadenosine + spermidine + H(+). It participates in amine and polyamine biosynthesis; spermidine biosynthesis; spermidine from putrescine: step 1/1. In terms of biological role, catalyzes the irreversible transfer of a propylamine group from the amino donor S-adenosylmethioninamine (decarboxy-AdoMet) to putrescine (1,4-diaminobutane) to yield spermidine. The chain is Polyamine aminopropyltransferase from Pyrobaculum calidifontis (strain DSM 21063 / JCM 11548 / VA1).